Reading from the N-terminus, the 221-residue chain is MHGIAVIELKGYREWTESLGPRREHIIQQIQAKLHATLWKSFTTVGALPHHFRYDFFIALVNNISSAAVESAVAKIARHSPVPIDFCIGTGDTPYSAYLNCRGKEVEATSFSIVAHMDIVNSTKTTKLNGPLDVYSHIVRLIDTLLDVCKEYGCLVFYLGGDNTALFLPTPDVINEIVRNIDTRVRVGVGVAKKPYNAFVKATRGLDYLRSTNREGIKIVK.

This sequence belongs to the archaeal-type GTP cyclohydrolase family.

The enzyme catalyses GTP + 3 H2O = 2-amino-5-formylamino-6-(5-phospho-D-ribosylamino)pyrimidin-4(3H)-one + 2 phosphate + 2 H(+). Functionally, catalyzes the formation of 2-amino-5-formylamino-6-ribofuranosylamino-4(3H)-pyrimidinone ribonucleotide monophosphate and inorganic phosphate from GTP. Also has an independent pyrophosphate phosphohydrolase activity. This is GTP cyclohydrolase III from Pyrobaculum islandicum (strain DSM 4184 / JCM 9189 / GEO3).